A 315-amino-acid chain; its full sequence is Putative purine nucleoside phosphorylase (315 aa).

Phosphate-binding positions include Ser49, His81, 103–105 (RYH), and Ala135. Glu220 is a binding site for a purine D-ribonucleoside. Ser239 contacts phosphate. Asn262 contributes to the a purine D-ribonucleoside binding site.

The protein belongs to the PNP/MTAP phosphorylase family.

Its subcellular location is the cytoplasm. The protein localises to the nucleus. It carries out the reaction a purine D-ribonucleoside + phosphate = a purine nucleobase + alpha-D-ribose 1-phosphate. It functions in the pathway purine metabolism; purine nucleoside salvage. In terms of biological role, the purine nucleoside phosphorylases catalyze the phosphorolytic breakdown of the N-glycosidic bond in the beta-(deoxy)ribonucleoside molecules, with the formation of the corresponding free purine bases and pentose-1-phosphate. Cleaves guanosine and inosine. This Schizosaccharomyces pombe (strain 972 / ATCC 24843) (Fission yeast) protein is Putative purine nucleoside phosphorylase.